The following is a 129-amino-acid chain: Protein Turandot B1 (129 aa).

Residues methionine 1–glycine 21 form the signal peptide.

This sequence belongs to the Turandot family.

It localises to the secreted. A humoral factor that may play a role in stress tolerance. In Drosophila erecta (Fruit fly), this protein is Protein Turandot B1 (TotB1).